The primary structure comprises 380 residues: Queuine tRNA-ribosyltransferase (380 aa).

Asp96 functions as the Proton acceptor in the catalytic mechanism. Substrate contacts are provided by residues 96 to 100 (DSGGF), Asp150, Gln193, and Gly220. Positions 251–257 (GVGAPDS) are RNA binding. Asp270 functions as the Nucleophile in the catalytic mechanism. Residues 275-279 (TRIAR) form an RNA binding; important for wobble base 34 recognition region. Zn(2+) contacts are provided by Cys308, Cys310, Cys313, and His339.

This sequence belongs to the queuine tRNA-ribosyltransferase family. In terms of assembly, homodimer. Within each dimer, one monomer is responsible for RNA recognition and catalysis, while the other monomer binds to the replacement base PreQ1. The cofactor is Zn(2+).

It carries out the reaction 7-aminomethyl-7-carbaguanine + guanosine(34) in tRNA = 7-aminomethyl-7-carbaguanosine(34) in tRNA + guanine. It participates in tRNA modification; tRNA-queuosine biosynthesis. Functionally, catalyzes the base-exchange of a guanine (G) residue with the queuine precursor 7-aminomethyl-7-deazaguanine (PreQ1) at position 34 (anticodon wobble position) in tRNAs with GU(N) anticodons (tRNA-Asp, -Asn, -His and -Tyr). Catalysis occurs through a double-displacement mechanism. The nucleophile active site attacks the C1' of nucleotide 34 to detach the guanine base from the RNA, forming a covalent enzyme-RNA intermediate. The proton acceptor active site deprotonates the incoming PreQ1, allowing a nucleophilic attack on the C1' of the ribose to form the product. After dissociation, two additional enzymatic reactions on the tRNA convert PreQ1 to queuine (Q), resulting in the hypermodified nucleoside queuosine (7-(((4,5-cis-dihydroxy-2-cyclopenten-1-yl)amino)methyl)-7-deazaguanosine). In Streptococcus thermophilus (strain ATCC BAA-250 / LMG 18311), this protein is Queuine tRNA-ribosyltransferase.